We begin with the raw amino-acid sequence, 518 residues long: MGSIIISALLALVIGAVVGFFVRKSIAEAKIGGAKAAAEQLIEEAKRAADALKKEALLEAKDEIHKLRTEAEHDIRDRRSELQKQENRLMQKEENLDRKDEALNKREALLEAKEEALNERQQHIEQMESKVETLIKQQQTELERISGLTRDDARHLILERVEKELSHEIAMMVKEAETRAKEEADKRAKAILSLAIQRCAADHVAETTVSVVNLPNDEMKGRIIGREGRNIRTLETLTGIDLIIDDTPEAVILSGFDPIRRETARIALDKLVQDGRIHPARIEEMVGKARREVDEHIREVGEQTTFEVGVHGLHPDLIKILGRLKFRTSYGQNVLKHSVEVAFLAGLMAAELGEDEMLARRAGLLHDIGKAIDHEVEGSHVEIGVELATKYKEHPVVINSIASHHGDTEPTSVIAVLVAAADALSAARPGARSETLENYIRRLEKLEEIAESYEGVEKSYAIQAGREVRIMVKPDMIDDLEAHRLARDIRKRIEEELDYPGHIKVTVIRETRAVEYAK.

Residues 2 to 22 traverse the membrane as a helical segment; it reads GSIIISALLALVIGAVVGFFV. The KH domain occupies 208–271; it reads TVSVVNLPND…ETARIALDKL (64 aa). Residues 334-427 enclose the HD domain; the sequence is VLKHSVEVAF…VAAADALSAA (94 aa).

This sequence belongs to the RNase Y family.

The protein localises to the cell membrane. In terms of biological role, endoribonuclease that initiates mRNA decay. In Geobacillus thermodenitrificans (strain NG80-2), this protein is Ribonuclease Y.